Consider the following 106-residue polypeptide: Iron-sulfur cluster assembly protein CyaY (106 aa).

This sequence belongs to the frataxin family.

In terms of biological role, involved in iron-sulfur (Fe-S) cluster assembly. May act as a regulator of Fe-S biogenesis. The chain is Iron-sulfur cluster assembly protein CyaY from Dickeya chrysanthemi (Pectobacterium chrysanthemi).